The primary structure comprises 96 residues: uncharacterized protein (96 aa).

This is an uncharacterized protein from Bacillus subtilis (strain 168).